The primary structure comprises 507 residues: Protein DETOXIFICATION 39 (507 aa).

The next 12 membrane-spanning stretches (helical) occupy residues 58–78, 92–112, 141–161, 178–198, 209–229, 233–253, 287–307, 318–338, 359–379, 403–423, 433–453, and 459–479; these read VLFRLALPAILIYLVNSGMGI, LAAASIGNSCFNLVYGLMLGM, IVLALVGLPMTLLYTFSYPIL, IAGLIPQIFAYAVNFTAQKFL, FISAAALILQILLTWITVYVM, FMGIAYVLTISWWVIVGSQCF, AVMICLEMWYSQILVLLAGLL, SICMSISALSFMVSVGFNAAV, WTATFVSFVISVTEALAVIWF, FLAITIILNGIQPVLSGVAVG, VNVGCYYVVGIPVGCILGFTF, and GIWTGMIGGTLMQTLILLYVT.

It belongs to the multi antimicrobial extrusion (MATE) (TC 2.A.66.1) family.

It is found in the membrane. This Arabidopsis thaliana (Mouse-ear cress) protein is Protein DETOXIFICATION 39.